Consider the following 155-residue polypeptide: 3-hydroxyacyl-[acyl-carrier-protein] dehydratase FabZ (155 aa).

The active site involves histidine 58.

The protein belongs to the thioester dehydratase family. FabZ subfamily.

It is found in the cytoplasm. It carries out the reaction a (3R)-hydroxyacyl-[ACP] = a (2E)-enoyl-[ACP] + H2O. In terms of biological role, involved in unsaturated fatty acids biosynthesis. Catalyzes the dehydration of short chain beta-hydroxyacyl-ACPs and long chain saturated and unsaturated beta-hydroxyacyl-ACPs. The sequence is that of 3-hydroxyacyl-[acyl-carrier-protein] dehydratase FabZ from Rhizobium johnstonii (strain DSM 114642 / LMG 32736 / 3841) (Rhizobium leguminosarum bv. viciae).